A 246-amino-acid polypeptide reads, in one-letter code: MNVVVVGATGRTGSEIVAEASERGHDVSGVARSQTSVGDVRVYPTEEFPELLDNADAVIDFTVPEATREHVQAAAAAGVPYVIGTTGFDDDGMAALRTASESTAVLKASNFARGVQALLRVVEAGVEALPEYDIELTETHHNGKRDAPSGTANTILDVVDETRDEALDRTHGREGEHRRGDDEVGVHVRRAGTVRGEHELLLAGNDEVLSLTHRAESRRVFAAGAVDAAEWLADRSAGWYDFEDTV.

NAD(+) contacts are provided by residues 7 to 12 (GATGRT), 84 to 86 (GTT), and 108 to 111 (ASNF). His140 serves as the catalytic Proton donor/acceptor. His141 is a (S)-2,3,4,5-tetrahydrodipicolinate binding site. Lys144 functions as the Proton donor in the catalytic mechanism. (S)-2,3,4,5-tetrahydrodipicolinate is bound at residue 150 to 151 (GT).

Belongs to the DapB family.

The protein resides in the cytoplasm. The enzyme catalyses (S)-2,3,4,5-tetrahydrodipicolinate + NAD(+) + H2O = (2S,4S)-4-hydroxy-2,3,4,5-tetrahydrodipicolinate + NADH + H(+). It carries out the reaction (S)-2,3,4,5-tetrahydrodipicolinate + NADP(+) + H2O = (2S,4S)-4-hydroxy-2,3,4,5-tetrahydrodipicolinate + NADPH + H(+). Its pathway is amino-acid biosynthesis; L-lysine biosynthesis via DAP pathway; (S)-tetrahydrodipicolinate from L-aspartate: step 4/4. In terms of biological role, catalyzes the conversion of 4-hydroxy-tetrahydrodipicolinate (HTPA) to tetrahydrodipicolinate. This is 4-hydroxy-tetrahydrodipicolinate reductase from Natronomonas pharaonis (strain ATCC 35678 / DSM 2160 / CIP 103997 / JCM 8858 / NBRC 14720 / NCIMB 2260 / Gabara) (Halobacterium pharaonis).